The primary structure comprises 572 residues: Phosphoglucomutase-1 (572 aa).

Residues T23, R27, 120–121 (SH), and K133 each bind substrate. S120 (phosphoserine intermediate) is an active-site residue. S120 is a Mg(2+) binding site. Residues D288, D290, and D292 each coordinate Mg(2+). Substrate is bound by residues 292–293 (DR), T356, 375–377 (EES), K388, and R524.

This sequence belongs to the phosphohexose mutase family. Mg(2+) is required as a cofactor.

The protein resides in the cytoplasm. It catalyses the reaction alpha-D-glucose 1-phosphate = alpha-D-glucose 6-phosphate. In terms of biological role, this enzyme participates in both the breakdown and synthesis of glucose. In Dictyostelium discoideum (Social amoeba), this protein is Phosphoglucomutase-1 (pgmA).